The primary structure comprises 701 residues: Elongation factor G 1 (701 aa).

One can recognise a tr-type G domain in the interval 13–288; sequence KYTRNIGIMA…GVIDYLPSPL (276 aa). Residues 22-29, 86-90, and 140-143 each bind GTP; these read AHIDAGKT, DTPGH, and NKMD.

Belongs to the TRAFAC class translation factor GTPase superfamily. Classic translation factor GTPase family. EF-G/EF-2 subfamily.

The protein resides in the cytoplasm. Catalyzes the GTP-dependent ribosomal translocation step during translation elongation. During this step, the ribosome changes from the pre-translocational (PRE) to the post-translocational (POST) state as the newly formed A-site-bound peptidyl-tRNA and P-site-bound deacylated tRNA move to the P and E sites, respectively. Catalyzes the coordinated movement of the two tRNA molecules, the mRNA and conformational changes in the ribosome. The protein is Elongation factor G 1 of Bdellovibrio bacteriovorus (strain ATCC 15356 / DSM 50701 / NCIMB 9529 / HD100).